The primary structure comprises 79 residues: Small ribosomal subunit protein bS18 (79 aa).

It belongs to the bacterial ribosomal protein bS18 family. In terms of assembly, part of the 30S ribosomal subunit. Forms a tight heterodimer with protein bS6.

Its function is as follows. Binds as a heterodimer with protein bS6 to the central domain of the 16S rRNA, where it helps stabilize the platform of the 30S subunit. In Bacillus subtilis (strain 168), this protein is Small ribosomal subunit protein bS18 (rpsR).